The following is a 240-amino-acid chain: tRNA (guanine-N(1)-)-methyltransferase (240 aa).

Residues Gly112 and 132–137 each bind S-adenosyl-L-methionine; that span reads LGDFVL.

Belongs to the RNA methyltransferase TrmD family. Homodimer.

It localises to the cytoplasm. It catalyses the reaction guanosine(37) in tRNA + S-adenosyl-L-methionine = N(1)-methylguanosine(37) in tRNA + S-adenosyl-L-homocysteine + H(+). In terms of biological role, specifically methylates guanosine-37 in various tRNAs. In Cyanothece sp. (strain PCC 7425 / ATCC 29141), this protein is tRNA (guanine-N(1)-)-methyltransferase.